A 473-amino-acid polypeptide reads, in one-letter code: DNA (cytosine-5)-methyltransferase DRM1A (473 aa).

The UBA 1 domain maps to 20-61 (SAPSALVAYFLGMGFSREMVFRAIKEIGDTDSEQILELLLTY). Residues 84-101 (EEEDEEEDVNWDEDDTVD) are compositionally biased toward acidic residues. The disordered stretch occupies residues 84 to 115 (EEEDEEEDVNWDEDDTVDNFDRATYSDGSGDE). The region spanning 120-140 (EMSEKDEKIKSLVSMGFPEDE) is the UBA 2 domain. An SAM-dependent MTase DRM-type domain is found at 204–431 (VHRNLPDQAL…DSVKTIMASI (228 aa)).

This sequence belongs to the class I-like SAM-binding methyltransferase superfamily. DRM-methyltransferase family.

It is found in the nucleus. The catalysed reaction is a 2'-deoxycytidine in DNA + S-adenosyl-L-methionine = a 5-methyl-2'-deoxycytidine in DNA + S-adenosyl-L-homocysteine + H(+). Functionally, involved in de novo DNA methylation. Involved in RNA-directed DNA methylation (RdDM). The polypeptide is DNA (cytosine-5)-methyltransferase DRM1A (Oryza sativa subsp. japonica (Rice)).